A 264-amino-acid polypeptide reads, in one-letter code: Tryptophan synthase alpha chain (264 aa).

Catalysis depends on proton acceptor residues Glu49 and Asp60.

This sequence belongs to the TrpA family. As to quaternary structure, tetramer of two alpha and two beta chains.

It carries out the reaction (1S,2R)-1-C-(indol-3-yl)glycerol 3-phosphate + L-serine = D-glyceraldehyde 3-phosphate + L-tryptophan + H2O. It participates in amino-acid biosynthesis; L-tryptophan biosynthesis; L-tryptophan from chorismate: step 5/5. Its function is as follows. The alpha subunit is responsible for the aldol cleavage of indoleglycerol phosphate to indole and glyceraldehyde 3-phosphate. In Geotalea daltonii (strain DSM 22248 / JCM 15807 / FRC-32) (Geobacter daltonii), this protein is Tryptophan synthase alpha chain.